The chain runs to 361 residues: Arginine N(omega)-methyltransferase (361 aa).

Basic and acidic residues predominate over residues 1–17; that stretch reads MRHVQEARAVPAEHEAR. Positions 1–24 are disordered; it reads MRHVQEARAVPAEHEARPAPVTMP. The 297-residue stretch at 65-361 folds into the SAM-dependent MTase PRMT-type domain; the sequence is DADAFAQIAR…WSDFTLRVSI (297 aa).

The protein belongs to the class I-like SAM-binding methyltransferase superfamily. Protein arginine N-methyltransferase family.

It carries out the reaction L-arginine + S-adenosyl-L-methionine = N(omega)-methyl-L-arginine + S-adenosyl-L-homocysteine + H(+). It functions in the pathway antibiotic biosynthesis. Involved in the biosynthesis of the glucosamine-nitrosourea antibiotic streptozotocin (SZN). Catalyzes the conversion of L-arginine to N(omega)-methyl-L-arginine (L-NMA), using S-adenosyl-L-methionine (SAM) as a methyl donor. The sequence is that of Arginine N(omega)-methyltransferase from Streptomyces achromogenes subsp. streptozoticus.